A 765-amino-acid polypeptide reads, in one-letter code: E3 ubiquitin-protein ligase SlrP (765 aa).

Positions 1–451 (MFNITNIQST…VDYQGPRVLF (451 aa)) are interaction with target proteins. 10 LRR repeats span residues 200–219 (QITT…ENLQ), 221–242 (NIKT…LPDT), 243–262 (IQEM…RLPS), 263–284 (ALQS…LPEE), 285–305 (LRYL…LPSG), 306–325 (ITHL…TLPP), 326–346 (GLKT…SLPP), 347–368 (ELQV…LPPT), 369–389 (ITTL…LPAA), and 390–410 (LQIM…LPHF). Positions 452–461 (AMGDFSIVRV) are linker. Residues 462–765 (TRPLHQAVQG…VSSLMSAYWR (304 aa)) are E3 ubiquitin-protein ligase catalytic domain. In terms of domain architecture, NEL spans 464-758 (PLHQAVQGWL…NILLKKEVSS (295 aa)). Cysteine 546 functions as the Glycyl thioester intermediate in the catalytic mechanism.

It belongs to the LRR-containing bacterial E3 ligase family. As to quaternary structure, interacts with host TXN. In terms of processing, ubiquitinated in the presence of host E1 ubiquitin-activating enzyme, E2 ubiquitin-conjugating enzyme and ubiquitin.

The protein localises to the secreted. The protein resides in the host cytoplasm. It carries out the reaction S-ubiquitinyl-[E2 ubiquitin-conjugating enzyme]-L-cysteine + [acceptor protein]-L-lysine = [E2 ubiquitin-conjugating enzyme]-L-cysteine + N(6)-ubiquitinyl-[acceptor protein]-L-lysine.. Its activity is regulated as follows. Binding to TXN is inhibited by hydrogen peroxide in vitro. Its function is as follows. Effector proteins function to alter host cell physiology and promote bacterial survival in host tissues. This protein is an E3 ubiquitin ligase that interferes with host's ubiquitination pathway. Can ubiquitinate both ubiquitin and host TXN (thioredoxin). Leads to significant decrease of thioredoxin activity and increase of host cell death. This Salmonella typhimurium (strain LT2 / SGSC1412 / ATCC 700720) protein is E3 ubiquitin-protein ligase SlrP (slrP).